We begin with the raw amino-acid sequence, 151 residues long: Probable cGMP 3',5'-cyclic phosphodiesterase subunit delta (151 aa).

The protein belongs to the PDE6D/unc-119 family. Interacts with Pde6.

It is found in the nucleus. Its subcellular location is the cytoplasm. In Anopheles gambiae (African malaria mosquito), this protein is Probable cGMP 3',5'-cyclic phosphodiesterase subunit delta.